The sequence spans 1124 residues: MDSLASLVLCGVSLLLSGTVEGAMDLILINSLPLVSDAETSLTCIASGWRPHEPITIGRDFEALMNQHQDPLEVTQDVTREWAKKVVWKREKASKINGAYFCEGRVRGEAIRIRTMKMRQQASFLPATLTMTVDKGDNVNISFKKVLIKEEDAVIYKNGSFIHSVPRHEVPDILEVHLPHAQPQDAGVYSARYIGGNLFTSAFTRLIVRRCEAQKWGPECNHLCTACMNNGVCHEDTGECICPPGFMGRTCEKACELHTFGRTCKERCSGQEGCKSYVFCLPDPYGCSCATGWKGLQCNEACHPGFYGPDCKLRCSCNNGEMCDRFQGCLCSPGWQGLQCEREGIQRMTPKIVDLPDHIEVNSGKFNPICKASGWPLPTNEEMTLVKPDGTVLHPKDFNHTDHFSVAIFTIHRILPPDSGVWVCSVNTVAGMVEKPFNISVKVLPKPLNAPNVIDTGHNFAVINISSEPYFGDGPIKSKKLLYKPVNHYEAWQHIQVTNEIVTLNYLEPRTEYELCVQLVRRGEGGEGHPGPVRRFTTASIGLPPPRGLNLLPKSQTTLNLTWQPIFPSSEDDFYVEVERRSVQKSDQQNIKVPGNLTSVLLNNLHPREQYVVRARVNTKAQGEWSEDLTAWTLSDILPPQPENIKISNITHSSAVISWTILDGYSISSITIRYKVQGKNEDQHVDVKIKNATITQYQLKGLEPETAYQVDIFAENNIGSSNPAFSHELVTLPESQAPADLGGGKMLLIAILGSAGMTCLTVLLAFLIILQLKRANVQRRMAQAFQNVREEPAVQFNSGTLALNRKVKNNPDPTIYPVLDWNDIKFQDVIGEGNFGQVLKARIKKDGLRMDAAIKRMKEYASKDDHRDFAGELEVLCKLGHHPNIINLLGACEHRGYLYLAIEYAPHGNLLDFLRKSRVLETDPAFAIANSTASTLSSQQLLHFAADVARGMDYLSQKQFIHRDLAARNILVGENYVAKIADFGLSRGQEVYVKKTMGRLPVRWMAIESLNYSVYTTNSDVWSYGVLLWEIVSLGGTPYCGMTCAELYEKLPQGYRLEKPLNCDDEVYDLMRQCWREKPYERPSFAQILVSLNRMLEERKTYVNTTLYEKFTYAGIDCSAEEAA.

An N-terminal signal peptide occupies residues 1–22 (MDSLASLVLCGVSLLLSGTVEG). Residues 23-748 (AMDLILINSL…ADLGGGKMLL (726 aa)) are Extracellular-facing. A disulfide bridge links Cys-44 with Cys-102. One can recognise an Ig-like C2-type 1 domain in the interval 44–123 (CIASGWRPHE…RTMKMRQQAS (80 aa)). Residues Asn-140 and Asn-158 are each glycosylated (N-linked (GlcNAc...) asparagine). EGF-like domains are found at residues 210–252 (RCEA…RTCE), 254–299 (ACEL…LQCN), and 301–341 (ACHP…LQCE). 13 cysteine pairs are disulfide-bonded: Cys-211–Cys-220, Cys-224–Cys-233, Cys-227–Cys-240, Cys-242–Cys-251, Cys-255–Cys-264, Cys-268–Cys-274, Cys-280–Cys-287, Cys-289–Cys-298, Cys-302–Cys-311, Cys-315–Cys-323, Cys-317–Cys-329, Cys-331–Cys-340, and Cys-370–Cys-424. The 91-residue stretch at 350-440 (PKIVDLPDHI…GMVEKPFNIS (91 aa)) folds into the Ig-like C2-type 2 domain. Residues Asn-399, Asn-438, Asn-464, Asn-560, Asn-596, Asn-649, and Asn-691 are each glycosylated (N-linked (GlcNAc...) asparagine). Fibronectin type-III domains follow at residues 447 to 541 (PLNA…TASI), 545 to 636 (PPRG…TLSD), and 641 to 735 (QPEN…LPES). Residues 749-769 (IAILGSAGMTCLTVLLAFLII) form a helical membrane-spanning segment. The Cytoplasmic segment spans residues 770-1124 (LQLKRANVQR…GIDCSAEEAA (355 aa)). The region spanning 824–1096 (IKFQDVIGEG…QILVSLNRML (273 aa)) is the Protein kinase domain. Residues 830 to 838 (IGEGNFGQV) and Lys-855 contribute to the ATP site. The residue at position 860 (Tyr-860) is a Phosphotyrosine; by autocatalysis. The active-site Proton acceptor is Asp-964. A phosphotyrosine; by autocatalysis mark is found at Tyr-992, Tyr-1102, and Tyr-1108.

It belongs to the protein kinase superfamily. Tyr protein kinase family. Tie subfamily. In terms of assembly, homodimer. Heterodimer with TIE1. Interacts with ANGPT1, ANGPT2 and ANGPT4. At cell-cell contacts in quiescent cells, forms a signaling complex composed of ANGPT1 plus TEK molecules from two adjoining cells. In the absence of endothelial cell-cell contacts, interaction with ANGPT1 mediates contacts with the extracellular matrix. Interacts with PTPRB; this promotes endothelial cell-cell adhesion. Interacts with DOK2, GRB2, GRB7, GRB14, PIK3R1 and PTPN11/SHP2. Colocalizes with DOK2 at contacts with the extracellular matrix in migrating cells. Interacts (tyrosine phosphorylated) with TNIP2. Interacts (tyrosine phosphorylated) with SHC1 (via SH2 domain). In terms of processing, proteolytic processing leads to the shedding of the extracellular domain (soluble TIE-2 alias sTIE-2). Post-translationally, autophosphorylated on tyrosine residues in response to ligand binding. Autophosphorylation occurs in trans, i.e. one subunit of the dimeric receptor phosphorylates tyrosine residues on the other subunit. Autophosphorylation occurs in a sequential manner, where Tyr-992 in the kinase activation loop is phosphorylated first, followed by autophosphorylation at Tyr-1108 and at additional tyrosine residues. ANGPT1-induced phosphorylation is impaired during hypoxia, due to increased expression of ANGPT2. Phosphorylation is important for interaction with GRB14, PIK3R1 and PTPN11. Phosphorylation at Tyr-1102 is important for interaction with SHC1, GRB2 and GRB7. Phosphorylation at Tyr-1108 is important for interaction with DOK2 and for coupling to downstream signal transduction pathways in endothelial cells. Dephosphorylated by PTPRB. Ubiquitinated. The phosphorylated receptor is ubiquitinated and internalized, leading to its degradation. As to expression, detected in umbilical vein endothelial cells. Proteolytic processing gives rise to a soluble extracellular domain that is detected in blood plasma (at protein level). Predominantly expressed in endothelial cells and their progenitors, the angioblasts. Has been directly found in placenta and lung, with a lower level in umbilical vein endothelial cells, brain and kidney.

The protein resides in the cell membrane. Its subcellular location is the cell junction. The protein localises to the focal adhesion. It is found in the cytoplasm. It localises to the cytoskeleton. The protein resides in the secreted. The enzyme catalyses L-tyrosyl-[protein] + ATP = O-phospho-L-tyrosyl-[protein] + ADP + H(+). With respect to regulation, angiopoietin binding leads to receptor dimerization and activation by autophosphorylation at Tyr-992 on the kinase activation loop. Inhibited by staurosporine, K252a, PP2, damnacanthal, SB203580, CEP-11207, CEP-11981 and CE-245677. Inhibited by triazine, thienopyrimidine and thiazolopyrimidine derivatives. Tyrosine-protein kinase that acts as a cell-surface receptor for ANGPT1, ANGPT2 and ANGPT4 and regulates angiogenesis, endothelial cell survival, proliferation, migration, adhesion and cell spreading, reorganization of the actin cytoskeleton, but also maintenance of vascular quiescence. Has anti-inflammatory effects by preventing the leakage of pro-inflammatory plasma proteins and leukocytes from blood vessels. Required for normal angiogenesis and heart development during embryogenesis. Required for post-natal hematopoiesis. After birth, activates or inhibits angiogenesis, depending on the context. Inhibits angiogenesis and promotes vascular stability in quiescent vessels, where endothelial cells have tight contacts. In quiescent vessels, ANGPT1 oligomers recruit TEK to cell-cell contacts, forming complexes with TEK molecules from adjoining cells, and this leads to preferential activation of phosphatidylinositol 3-kinase and the AKT1 signaling cascades. In migrating endothelial cells that lack cell-cell adhesions, ANGT1 recruits TEK to contacts with the extracellular matrix, leading to the formation of focal adhesion complexes, activation of PTK2/FAK and of the downstream kinases MAPK1/ERK2 and MAPK3/ERK1, and ultimately to the stimulation of sprouting angiogenesis. ANGPT1 signaling triggers receptor dimerization and autophosphorylation at specific tyrosine residues that then serve as binding sites for scaffold proteins and effectors. Signaling is modulated by ANGPT2 that has lower affinity for TEK, can promote TEK autophosphorylation in the absence of ANGPT1, but inhibits ANGPT1-mediated signaling by competing for the same binding site. Signaling is also modulated by formation of heterodimers with TIE1, and by proteolytic processing that gives rise to a soluble TEK extracellular domain. The soluble extracellular domain modulates signaling by functioning as decoy receptor for angiopoietins. TEK phosphorylates DOK2, GRB7, GRB14, PIK3R1; SHC1 and TIE1. This is Angiopoietin-1 receptor from Homo sapiens (Human).